A 178-amino-acid polypeptide reads, in one-letter code: MSRIGKKPVAIPSGIEVKVDGNVLKFKKGNAQKELDTKNHVDVKVEDGKVEFSPKGEDRQSMAFWGTYRALAHNIVVGLTDGFSKQLEINGVGYKAAMKGKILELTLGYSHLVNYEVPDGIEISVDKNVITIKGTDKQQVGQVAAIIRDFRAPEPYKGKGVKYLEEHIIRKAGKTAKK.

The protein belongs to the universal ribosomal protein uL6 family. As to quaternary structure, part of the 50S ribosomal subunit.

In terms of biological role, this protein binds to the 23S rRNA, and is important in its secondary structure. It is located near the subunit interface in the base of the L7/L12 stalk, and near the tRNA binding site of the peptidyltransferase center. The sequence is that of Large ribosomal subunit protein uL6 from Campylobacter hominis (strain ATCC BAA-381 / DSM 21671 / CCUG 45161 / LMG 19568 / NCTC 13146 / CH001A).